We begin with the raw amino-acid sequence, 533 residues long: Acetone monooxygenase (methyl acetate-forming) (533 aa).

FAD-binding positions include 43 to 46, 55 to 56, and tyrosine 61; these read TWYW and DS. 53–55 is a binding site for NADP(+); sequence RFD. Residues 183–189, 206–207, and tryptophan 492 contribute to the NADP(+) site; these read NGATGIQ and RT.

This sequence belongs to the FAD-binding monooxygenase family. Homotetramer. FAD is required as a cofactor.

The enzyme catalyses acetone + NADPH + O2 + H(+) = methyl acetate + NADP(+) + H2O. Plays an important role in the metabolism of acetone derived from propane oxidation. Catalyzes the oxidation of acetone to methyl acetate. Exhibits high catalytic efficiency towards various linear and cyclic ketones, such as butanone, 2-pentanone, 2-heptanone, 2-octanone, 2-nonanone, 2-decanone, cyclobutanone, cyclopentanone and cyclohexanone. Elicits the highest catalytic efficiency towards butanone and cyclobutanone. Is highly specific for NADPH and cannot use NADH. This Gordonia sp. (strain TY-5) protein is Acetone monooxygenase (methyl acetate-forming).